Here is a 342-residue protein sequence, read N- to C-terminus: Ribosomal RNA small subunit methyltransferase C (342 aa).

This sequence belongs to the methyltransferase superfamily. RsmC family. In terms of assembly, monomer.

It is found in the cytoplasm. It catalyses the reaction guanosine(1207) in 16S rRNA + S-adenosyl-L-methionine = N(2)-methylguanosine(1207) in 16S rRNA + S-adenosyl-L-homocysteine + H(+). In terms of biological role, specifically methylates the guanine in position 1207 of 16S rRNA in the 30S particle. The sequence is that of Ribosomal RNA small subunit methyltransferase C from Salmonella arizonae (strain ATCC BAA-731 / CDC346-86 / RSK2980).